A 471-amino-acid chain; its full sequence is Glutamate--tRNA ligase (471 aa).

Residues 10–20 (PSPTGYLHIGG) carry the 'HIGH' region motif. 4 residues coordinate Zn(2+): C107, C109, C134, and E136. The 'KMSKS' region signature appears at 244 to 248 (RLSKR). K247 contacts ATP.

The protein belongs to the class-I aminoacyl-tRNA synthetase family. Glutamate--tRNA ligase type 1 subfamily. As to quaternary structure, monomer. It depends on Zn(2+) as a cofactor.

It localises to the cytoplasm. It catalyses the reaction tRNA(Glu) + L-glutamate + ATP = L-glutamyl-tRNA(Glu) + AMP + diphosphate. Its function is as follows. Catalyzes the attachment of glutamate to tRNA(Glu) in a two-step reaction: glutamate is first activated by ATP to form Glu-AMP and then transferred to the acceptor end of tRNA(Glu). This Anaeromyxobacter sp. (strain Fw109-5) protein is Glutamate--tRNA ligase.